The following is a 192-amino-acid chain: Xanthine phosphoribosyltransferase (192 aa).

Residues Leu-20 and Asn-27 each contribute to the xanthine site. Ala-128–Ala-132 contributes to the 5-phospho-alpha-D-ribose 1-diphosphate binding site. Lys-156 serves as a coordination point for xanthine.

The protein belongs to the purine/pyrimidine phosphoribosyltransferase family. Xpt subfamily. In terms of assembly, homodimer.

The protein localises to the cytoplasm. It carries out the reaction XMP + diphosphate = xanthine + 5-phospho-alpha-D-ribose 1-diphosphate. Its pathway is purine metabolism; XMP biosynthesis via salvage pathway; XMP from xanthine: step 1/1. Its function is as follows. Converts the preformed base xanthine, a product of nucleic acid breakdown, to xanthosine 5'-monophosphate (XMP), so it can be reused for RNA or DNA synthesis. The chain is Xanthine phosphoribosyltransferase from Agathobacter rectalis (strain ATCC 33656 / DSM 3377 / JCM 17463 / KCTC 5835 / VPI 0990) (Eubacterium rectale).